Here is a 58-residue protein sequence, read N- to C-terminus: Large ribosomal subunit protein uL30 (58 aa).

This sequence belongs to the universal ribosomal protein uL30 family. In terms of assembly, part of the 50S ribosomal subunit.

The protein is Large ribosomal subunit protein uL30 of Buchnera aphidicola subsp. Baizongia pistaciae (strain Bp).